Reading from the N-terminus, the 699-residue chain is UV radiation resistance-associated gene protein (699 aa).

The span at 1 to 10 (MSASASVGGP) shows a compositional bias: low complexity. The tract at residues 1-24 (MSASASVGGPVPQPPPGPAAALPP) is disordered. In terms of domain architecture, C2 spans 23 to 149 (PPGSAARALH…YLGQQIHARN (127 aa)). Positions 200-269 (HRAQCAIKQT…REVALLHKQQ (70 aa)) are sufficient for interaction with STX7; VTI1B AND STX8. The stretch at 224-305 (LRLTSTSNEL…LRKECTAKRE (82 aa)) forms a coiled coil. The interval 270–442 (IALQDKGSAF…IAQLRYQHGL (173 aa)) is sufficient for interaction with VPS16, required for interaction with CEP63. Residues 443-699 (GTPDLRQTLP…FRRPRRSSDK (257 aa)) form a required for interaction with PRKDC, XRCC6 and XRCC5 region. Residues 486 to 591 (GGADVGFSGG…SQEQGEALSG (106 aa)) form a disordered region. Phosphoserine is present on serine 493. Serine 498 is subject to Phosphoserine; by MTOR. Serine 508 carries the post-translational modification Phosphoserine. Threonine 518 bears the Phosphothreonine mark. Serine 522 is subject to Phosphoserine. Residues 523–535 (YNSALAQPVTTVP) show a composition bias toward polar residues. Over residues 545-556 (TSLSSSLDTSLD) the composition is skewed to low complexity. A phosphoserine mark is found at serine 549 and serine 550. Residues 557–567 (FSKENKKKGED) show a composition bias toward basic and acidic residues. Residues serine 571, serine 582, and serine 689 each carry the phosphoserine modification.

In terms of assembly, component of the PI3K (PI3KC3/PI3K-III/class III phosphatidylinositol 3-kinase) complex II (PI3KC3-C2) in which the core composed of the catalytic subunit PIK3C3, the regulatory subunit PIK3R4 and BECN1 is associated with UVRAG; in the complex interacts directly with BECN1. PI3KC3-C2 can associate with further regulatory subunits such as RUBCN and probably SH3GLB1/Bif-1. Interacts with SH3GLB1; UVRAG bridges the interaction to BECN1 indicative for an association with the PI3K complex PI3KC3-C2. Interacts with RINT1. Associates with the NRZ complex under basal conditions and dissociates from it under autophagy conditions to associate with the PI3K complex; these complex associations seem to be mutually exclusive. Interacts with VPS16; VPS11; VPS18; VPS33 (VPS33A or VPS33B) and VPS39; indicative for an association with a class C Vps tethering complex (possibly the HOPS complex). Interacts with RAB7A; RAB7A competes with UVRAG for RUBCN binding. Interacts with STX7, VTI1B, STX8. Interacts with PRKDC, XRCC6 and XRCC5; indicative for an association with the DNA-dependent protein kinase complex DNA-PK. Interacts with CEP63. Directly interacts with FEZ1 and SCOC; the interaction with SCOC is reduced by amino acid starvation, but the complex is stabilized in the presence of FEZ1. Interacts with BECN1P1/BECN2. Interacts with SLAMF1. Interacts with RUBCNL/PACER; promoting targeting of UVRAG to autophagosome. Interacts with WNK1. In terms of processing, phosphorylated at Ser-498 by MTOR under basal conditions; increases the interaction with RUBCN implicated in inhibitory effect of RUBCN on PI3KC3 and decreases interaction with RAB7,A and VPS16 and VPS39 (indicative for a class C Vps complex, possibly the HOPS complex). In terms of tissue distribution, highly expressed in brain, lung, kidney and liver.

Its subcellular location is the late endosome. The protein resides in the lysosome. The protein localises to the cytoplasmic vesicle. It is found in the autophagosome. It localises to the early endosome. Its subcellular location is the endoplasmic reticulum. The protein resides in the midbody. The protein localises to the chromosome. It is found in the centromere. Its function is as follows. Versatile protein that is involved in regulation of different cellular pathways implicated in membrane trafficking. Involved in regulation of the COPI-dependent retrograde transport from Golgi and the endoplasmic reticulum by associating with the NRZ complex; the function is dependent on its binding to phosphatidylinositol 3-phosphate (PtdIns(3)P). During autophagy acts as a regulatory subunit of the alternative PI3K complex II (PI3KC3-C2) that mediates formation of phosphatidylinositol 3-phosphate and is believed to be involved in maturation of autophagosomes and endocytosis. Activates lipid kinase activity of PIK3C3. Involved in the regulation of degradative endocytic trafficking and cytokinesis, and in regulation of ATG9A transport from the Golgi to the autophagosome; the functions seems to implicate its association with PI3KC3-C2. Involved in maturation of autophagosomes and degradative endocytic trafficking independently of BECN1 but depending on its association with a class C Vps complex (possibly the HOPS complex); the association is also proposed to promote autophagosome recruitment and activation of Rab7 and endosome-endosome fusion events. Enhances class C Vps complex (possibly HOPS complex) association with a SNARE complex and promotes fusogenic SNARE complex formation during late endocytic membrane fusion. In case of negative-strand RNA virus infection is required for efficient virus entry, promotes endocytic transport of virions and is implicated in a VAMP8-specific fusogenic SNARE complex assembly. Involved in maintaining chromosomal stability. Promotes DNA double-strand break (DSB) repair by association with DNA-dependent protein kinase complex DNA-PK and activating it in non-homologous end joining (NHEJ). Required for centrosome stability and proper chromosome segregation. This Homo sapiens (Human) protein is UV radiation resistance-associated gene protein (UVRAG).